Consider the following 22-residue polypeptide: Zinc metalloproteinase oxiagin (22 aa).

A Peptidase M12B domain is found at 14 to 22; it reads CYIEFYVVV.

Belongs to the venom metalloproteinase (M12B) family. P-III subfamily. P-IIId sub-subfamily. In terms of assembly, heterotrimer; disulfide-linked. The heterotrimer consists of 1 metalloproteinase chain and 2 lectin chains. Requires Zn(2+) as cofactor. Post-translationally, N-glycosylated. In terms of tissue distribution, expressed by the venom gland.

The protein resides in the secreted. Functionally, snake venom metalloproteinase that inhibits the classical complement pathway dose-dependently. It acts by binding to carbohydrates of IgG within the antibody-sensitized sheep erythrocytes (EA) complex, and thus prevents interaction of component C2 with immobilized C4b. Also induces cation-independent hemagglutination that can be prevented by D-galactose pretreatment. The chain is Zinc metalloproteinase oxiagin from Naja oxiana (Central Asian cobra).